Consider the following 157-residue polypeptide: Transcriptional repressor NrdR (157 aa).

The segment at 3 to 34 (CPSCQNTDSRVLESRSADAGKCVRRRRECLNC) is a zinc-finger region. In terms of domain architecture, ATP-cone spans 49 to 139 (VTVIKRSNAK…VYRQFNGIED (91 aa)).

The protein belongs to the NrdR family. Requires Zn(2+) as cofactor.

Its function is as follows. Negatively regulates transcription of bacterial ribonucleotide reductase nrd genes and operons by binding to NrdR-boxes. This chain is Transcriptional repressor NrdR, found in Prochlorococcus marinus (strain SARG / CCMP1375 / SS120).